A 242-amino-acid chain; its full sequence is Beta-carotene ketolase (242 aa).

The catalysed reaction is all-trans-beta-carotene + 2 AH2 + 2 O2 = echinenone + 2 A + 3 H2O. It catalyses the reaction echinenone + 2 AH2 + 2 O2 = canthaxanthin + 2 A + 3 H2O. It functions in the pathway carotenoid biosynthesis; astaxanthin biosynthesis. Converts beta-carotene to canthaxanthin via echinenone. This is Beta-carotene ketolase from Paracoccus sp. (strain PC1) (Alcaligenes sp. (strain PC1)).